Here is a 429-residue protein sequence, read N- to C-terminus: 46 kDa membrane protein (429 aa).

9 helical membrane passes run 26 to 46, 51 to 71, 99 to 119, 173 to 193, 224 to 244, 279 to 299, 315 to 335, 360 to 380, and 407 to 427; these read AALTGAAIVVTLPIINSEDVF, TGIDWEVIFLLLSMMIIVSVL, LVLVMALGSALLDNVTTVLLI, FLIHLTPIVIIVTVVLSALLP, LLIKCGVVLLLVFVAFIAHPV, TLLFFAGLFIMVGALVKTDVV, LLTVVLTLGVSTLVSSIIDNI, ILWWALALGADFGGNLTAVGA, and IAVTVISIALAGIYLWLRYLV.

It belongs to the CitM (TC 2.A.11) transporter family.

The protein localises to the cell membrane. The polypeptide is 46 kDa membrane protein (ag45) (Mycobacterium leprae (strain TN)).